The sequence spans 456 residues: Coenzyme F420 hydrogenase subunit alpha (456 aa).

Positions 63, 66, 432, and 435 each coordinate Ni(2+).

The protein belongs to the [NiFe]/[NiFeSe] hydrogenase large subunit family. As to quaternary structure, pentamer of two alpha chains, two beta chains and a gamma chain. Ni(2+) serves as cofactor. The cofactor is iron-sulfur cluster. Requires FAD as cofactor.

The protein resides in the cell membrane. The catalysed reaction is oxidized coenzyme F420-(gamma-L-Glu)(n) + H2 + H(+) = reduced coenzyme F420-(gamma-L-Glu)(n). Its function is as follows. Reduces the physiological low-potential two-electron acceptor coenzyme F420, and the artificial one-electron acceptor methylviologen. This is Coenzyme F420 hydrogenase subunit alpha (frhA) from Methanosarcina barkeri (strain Fusaro / DSM 804).